We begin with the raw amino-acid sequence, 103 residues long: Large ribosomal subunit protein bL21 (103 aa).

Belongs to the bacterial ribosomal protein bL21 family. As to quaternary structure, part of the 50S ribosomal subunit. Contacts protein L20.

Its function is as follows. This protein binds to 23S rRNA in the presence of protein L20. The sequence is that of Large ribosomal subunit protein bL21 from Shigella sonnei (strain Ss046).